The chain runs to 182 residues: Ribosome-recycling factor (182 aa).

Belongs to the RRF family.

Its subcellular location is the cytoplasm. Responsible for the release of ribosomes from messenger RNA at the termination of protein biosynthesis. May increase the efficiency of translation by recycling ribosomes from one round of translation to another. This is Ribosome-recycling factor from Picosynechococcus sp. (strain ATCC 27264 / PCC 7002 / PR-6) (Agmenellum quadruplicatum).